The primary structure comprises 434 residues: D-amino acid dehydrogenase (434 aa).

Valine 3 to tyrosine 17 is a binding site for FAD.

This sequence belongs to the DadA oxidoreductase family. Requires FAD as cofactor.

The catalysed reaction is a D-alpha-amino acid + A + H2O = a 2-oxocarboxylate + AH2 + NH4(+). Its function is as follows. Oxidative deamination of D-amino acids. This Bordetella parapertussis (strain 12822 / ATCC BAA-587 / NCTC 13253) protein is D-amino acid dehydrogenase.